Reading from the N-terminus, the 204-residue chain is LexA repressor (204 aa).

The H-T-H motif DNA-binding region spans 29 to 49 (VREIGDAVGLMSSSTVHGHLQ). Active-site for autocatalytic cleavage activity residues include serine 127 and lysine 164.

This sequence belongs to the peptidase S24 family. As to quaternary structure, homodimer.

It catalyses the reaction Hydrolysis of Ala-|-Gly bond in repressor LexA.. Its function is as follows. Represses a number of genes involved in the response to DNA damage (SOS response), including recA and lexA. In the presence of single-stranded DNA, RecA interacts with LexA causing an autocatalytic cleavage which disrupts the DNA-binding part of LexA, leading to derepression of the SOS regulon and eventually DNA repair. The chain is LexA repressor from Desulfitobacterium hafniense (strain DSM 10664 / DCB-2).